The primary structure comprises 1102 residues: Putative helicase/primase complex protein (1102 aa).

Disordered regions lie at residues 1031–1057 (TKEE…EETC) and 1082–1102 (EETC…FTET).

Belongs to the asfivirus F1055L family.

Functionally, may be involved in DNA replication. In African swine fever virus (isolate Tick/Malawi/Lil 20-1/1983) (ASFV), this protein is Putative helicase/primase complex protein.